Consider the following 226-residue polypeptide: TPD1 protein homolog 1A (226 aa).

The N-terminal stretch at 1 to 35 is a signal peptide; sequence MRVSSASSTPPPPAFAAAAWAVVLLAMLRSDVALA.

In terms of assembly, interacts with MSP1. As to expression, expressed in roots, and anthers and ovules during meiosis.

In terms of biological role, involved in cell specification during anther development. Required for the differentiation of primary parietal cells into secondary parietal cells in anthers. May serve as an extracellular ligand for the MSP1 receptor kinase to limit sporocyte number in ovules. The protein is TPD1 protein homolog 1A of Oryza sativa subsp. japonica (Rice).